The chain runs to 189 residues: Nuclear distribution protein nudE homolog 1 (189 aa).

The stretch at 4-121 (NLDLETAIQI…LRVSKEEATS (118 aa)) forms a coiled coil. Over residues 114–126 (VSKEEATSGETRR) the composition is skewed to basic and acidic residues. The interval 114 to 139 (VSKEEATSGETRRNTRSLPSQNKKMK) is disordered.

The protein belongs to the nudE family. In terms of assembly, self-associates. Interacts with PAC1.

It is found in the nucleus. Its subcellular location is the cytoplasm. The protein localises to the cytoskeleton. Required for nuclear migration to the bud neck during cell division. Targets cytoplasmic dynein to microtubule plus ends thereby promoting dynein-mediated microtubule sliding along the bud cortex and consequently the movement of the mitotic spindle to the bud neck. The chain is Nuclear distribution protein nudE homolog 1 (NDL1) from Saccharomyces cerevisiae (strain ATCC 204508 / S288c) (Baker's yeast).